We begin with the raw amino-acid sequence, 126 residues long: UPF0102 protein TP_0913 (126 aa).

Belongs to the UPF0102 family.

The protein is UPF0102 protein TP_0913 of Treponema pallidum (strain Nichols).